Reading from the N-terminus, the 190-residue chain is Elongation factor P-like protein (190 aa).

It belongs to the elongation factor P family.

The sequence is that of Elongation factor P-like protein from Pseudoalteromonas translucida (strain TAC 125).